Here is a 55-residue protein sequence, read N- to C-terminus: Metallothionein-3 (55 aa).

It belongs to the metallothionein superfamily. Type 11 family.

This Yarrowia lipolytica (strain CLIB 122 / E 150) (Yeast) protein is Metallothionein-3 (MTP3).